Consider the following 217-residue polypeptide: Large ribosomal subunit protein uL1 (217 aa).

The residue at position 2 (S2) is an N-acetylserine. Position 11 is a phosphotyrosine (Y11). N6-acetyllysine occurs at positions 91 and 106. K118 carries the N6-acetyllysine; alternate modification. A Glycyl lysine isopeptide (Lys-Gly) (interchain with G-Cter in SUMO1); alternate cross-link involves residue K118. K118 is covalently cross-linked (Glycyl lysine isopeptide (Lys-Gly) (interchain with G-Cter in SUMO2); alternate). K161 is covalently cross-linked (Glycyl lysine isopeptide (Lys-Gly) (interchain with G-Cter in SUMO2)).

It belongs to the universal ribosomal protein uL1 family. As to quaternary structure, component of the large ribosomal subunit.

It localises to the cytoplasm. Component of the large ribosomal subunit. The ribosome is a large ribonucleoprotein complex responsible for the synthesis of proteins in the cell. This is Large ribosomal subunit protein uL1 (Rpl10a) from Mus musculus (Mouse).